A 444-amino-acid polypeptide reads, in one-letter code: Ribulose bisphosphate carboxylase large chain (444 aa).

K7 is modified (N6,N6,N6-trimethyllysine). Substrate-binding residues include N116 and T166. K168 serves as the catalytic Proton acceptor. A substrate-binding site is contributed by K170. Residues K194, D196, and E197 each coordinate Mg(2+). At K194 the chain carries N6-carboxylysine. H287 acts as the Proton acceptor in catalysis. Residues R288, H320, and S372 each coordinate substrate.

Belongs to the RuBisCO large chain family. Type I subfamily. Heterohexadecamer of 8 large chains and 8 small chains; disulfide-linked. The disulfide link is formed within the large subunit homodimers. Mg(2+) is required as a cofactor. Post-translationally, the disulfide bond which can form in the large chain dimeric partners within the hexadecamer appears to be associated with oxidative stress and protein turnover.

The protein localises to the plastid. Its subcellular location is the chloroplast. The catalysed reaction is 2 (2R)-3-phosphoglycerate + 2 H(+) = D-ribulose 1,5-bisphosphate + CO2 + H2O. It carries out the reaction D-ribulose 1,5-bisphosphate + O2 = 2-phosphoglycolate + (2R)-3-phosphoglycerate + 2 H(+). RuBisCO catalyzes two reactions: the carboxylation of D-ribulose 1,5-bisphosphate, the primary event in carbon dioxide fixation, as well as the oxidative fragmentation of the pentose substrate in the photorespiration process. Both reactions occur simultaneously and in competition at the same active site. The polypeptide is Ribulose bisphosphate carboxylase large chain (Watsonia angusta).